Consider the following 382-residue polypeptide: Ubiquitin-like protease 4 (382 aa).

The segment at 46–106 (GTHLDGSIGE…DNDEWTNQKR (61 aa)) is disordered. Residues 84 to 100 (DLVDEDEEEEDEEDNDE) show a composition bias toward acidic residues.

This sequence belongs to the peptidase C48 family. As to expression, expressed in hermaphrodite-specific neurons, head muscles, body wall muscles and pharyngeal cells.

It localises to the cytoplasm. The protein resides in the cytoskeleton. The protein localises to the microtubule organizing center. Its subcellular location is the centrosome. It is found in the nucleus. It localises to the mitochondrion matrix. The protein operates within protein modification; protein sumoylation. Functionally, protease required for deconjugation of smo-1 conjugates from target proteins which is necessary for cell cycle progression. Required for respiration and the maintenance of normal mitochondrial homeostasis. In response to mitochondrial stress, required for the removal of smo-1 conjugates from the transcription factor dve-1, which promotes the translocation of dve-1 from the cytosol to the nucleus to initiate the mitochondrial unfolded protein response. Furthermore, removes the smo-1 conjugates from the transcription factor atfs-1 to promote its stability and activate the mitochondrial unfolded protein response. Also plays a role in promoting mitochondrial unfolded protein response-mediated innate immunity following infection with P.aeruginosa. This is Ubiquitin-like protease 4 from Caenorhabditis elegans.